The following is a 408-amino-acid chain: Protein EcsB (408 aa).

Helical transmembrane passes span 30-50 (HLVI…SKWI), 53-73 (IPAH…VLTS), 111-131 (LFPL…VTPG), 134-154 (LVSY…NQVM), 180-200 (LVLY…YVIM), 284-304 (YLGI…YVSA), 308-328 (IAAV…LPLF), 351-371 (YFSL…VASA), and 374-394 (AGLT…FVVL).

It localises to the cell membrane. Functionally, presumed to form part of an ABC-transporter, it may form a transport channel. The sequence is that of Protein EcsB (ecsB) from Bacillus subtilis (strain 168).